Consider the following 396-residue polypeptide: tRNA (guanine-N(7)-)-methyltransferase (396 aa).

S-adenosyl-L-methionine is bound by residues Glu125, Glu150, and Asp177. Lys203 and Asp233 together coordinate substrate.

This sequence belongs to the class I-like SAM-binding methyltransferase superfamily. TrmB family.

The catalysed reaction is guanosine(46) in tRNA + S-adenosyl-L-methionine = N(7)-methylguanosine(46) in tRNA + S-adenosyl-L-homocysteine. The protein operates within tRNA modification; N(7)-methylguanine-tRNA biosynthesis. Functionally, catalyzes the formation of N(7)-methylguanine at position 46 (m7G46) in tRNA. The protein is tRNA (guanine-N(7)-)-methyltransferase of Helicobacter hepaticus (strain ATCC 51449 / 3B1).